Reading from the N-terminus, the 454-residue chain is MSHNDTIVAQATPPGRGGVGILRISGLKARDVAQAVLGKLPKPRYADYLPFNDVDGTPLDQGIALWFPGPNSFTGEDVLELQGHGGPVILDLLLKRILTLPGVRIARPGEFSERAFLNDKLDLAQAEAIADLIDASSEQAARSALNSLQGAFSARVNHLVEALTHLRIYVEAAIDFPDEEIDFLSDGKIEAQLNGVMADLDAVRAEARQGSLLREGMKVVIAGRPNAGKSSLLNALAGREAAIVTDIAGTTRDVLREHIHIDGMPLHIIDTAGLRDASDEVERIGIERAWQEIEQADRVLFMVDGTTTSAVDPAEIWPDFIERLPAKLPITVVRNKADVTGEALGLSEVNGHSLIRLSARTGEGVEVLRNHLKQSMGFDTSMEGGFLARRRHLQALEEAANHLQQGKAQLLGAWAGELLAEELRLAQQALSEITGEFTSDDLLGRIFSSFCIGK.

Residues Arg23, Glu80, and Lys120 each contribute to the (6S)-5-formyl-5,6,7,8-tetrahydrofolate site. One can recognise a TrmE-type G domain in the interval 216-377; that stretch reads GMKVVIAGRP…LRNHLKQSMG (162 aa). Asn226 is a K(+) binding site. Residues 226–231, 245–251, 270–273, 335–338, and 358–360 each bind GTP; these read NAGKSS, TDIAGTT, DTAG, NKAD, and SAR. Ser230 is a Mg(2+) binding site. 3 residues coordinate K(+): Thr245, Ile247, and Thr250. A Mg(2+)-binding site is contributed by Thr251. Lys454 serves as a coordination point for (6S)-5-formyl-5,6,7,8-tetrahydrofolate.

Belongs to the TRAFAC class TrmE-Era-EngA-EngB-Septin-like GTPase superfamily. TrmE GTPase family. Homodimer. Heterotetramer of two MnmE and two MnmG subunits. The cofactor is K(+).

It is found in the cytoplasm. Functionally, exhibits a very high intrinsic GTPase hydrolysis rate. Involved in the addition of a carboxymethylaminomethyl (cmnm) group at the wobble position (U34) of certain tRNAs, forming tRNA-cmnm(5)s(2)U34. The sequence is that of tRNA modification GTPase MnmE from Klebsiella pneumoniae (strain 342).